We begin with the raw amino-acid sequence, 107 residues long: Translation initiation factor IF-1, chloroplastic (107 aa).

One can recognise an S1-like domain in the interval 8-83 (REKKNPREAK…SKGRIIYRLP (76 aa)). The disordered stretch occupies residues 81-107 (RLPHKDSKRTEDSKDTEDLKDTKDSKG). The span at 83-107 (PHKDSKRTEDSKDTEDLKDTKDSKG) shows a compositional bias: basic and acidic residues.

It belongs to the IF-1 family. As to quaternary structure, component of the 30S ribosomal translation pre-initiation complex which assembles on the 30S ribosome in the order IF-2 and IF-3, IF-1 and N-formylmethionyl-tRNA(fMet); mRNA recruitment can occur at any time during PIC assembly.

The protein resides in the plastid. Its subcellular location is the chloroplast. In terms of biological role, one of the essential components for the initiation of protein synthesis. Stabilizes the binding of IF-2 and IF-3 on the 30S subunit to which N-formylmethionyl-tRNA(fMet) subsequently binds. Helps modulate mRNA selection, yielding the 30S pre-initiation complex (PIC). Upon addition of the 50S ribosomal subunit IF-1, IF-2 and IF-3 are released leaving the mature 70S translation initiation complex. This Oryza sativa subsp. indica (Rice) protein is Translation initiation factor IF-1, chloroplastic.